The sequence spans 208 residues: LexA repressor (208 aa).

Residues 29–49 (VREICSAVGLSSTSTVHGHIS) constitute a DNA-binding region (H-T-H motif). Active-site for autocatalytic cleavage activity residues include Ser-129 and Lys-167.

Belongs to the peptidase S24 family. Homodimer.

It catalyses the reaction Hydrolysis of Ala-|-Gly bond in repressor LexA.. Represses a number of genes involved in the response to DNA damage (SOS response), including recA and lexA. In the presence of single-stranded DNA, RecA interacts with LexA causing an autocatalytic cleavage which disrupts the DNA-binding part of LexA, leading to derepression of the SOS regulon and eventually DNA repair. This is LexA repressor from Limosilactobacillus reuteri (strain DSM 20016) (Lactobacillus reuteri).